Reading from the N-terminus, the 467-residue chain is Ribulose bisphosphate carboxylase large chain (467 aa).

At Lys-5 the chain carries N6,N6,N6-trimethyllysine. Positions 114 and 164 each coordinate substrate. Catalysis depends on Lys-166, which acts as the Proton acceptor. Lys-168 serves as a coordination point for substrate. Mg(2+)-binding residues include Lys-192, Asp-194, and Glu-195. Position 192 is an N6-carboxylysine (Lys-192). His-285 serves as the catalytic Proton acceptor. Substrate contacts are provided by Arg-286, His-318, and Ser-370.

It belongs to the RuBisCO large chain family. Type I subfamily. As to quaternary structure, heterohexadecamer of 8 large chains and 8 small chains; disulfide-linked. The disulfide link is formed within the large subunit homodimers. Requires Mg(2+) as cofactor. In terms of processing, the disulfide bond which can form in the large chain dimeric partners within the hexadecamer appears to be associated with oxidative stress and protein turnover.

The protein localises to the plastid. It is found in the chloroplast. It carries out the reaction 2 (2R)-3-phosphoglycerate + 2 H(+) = D-ribulose 1,5-bisphosphate + CO2 + H2O. The enzyme catalyses D-ribulose 1,5-bisphosphate + O2 = 2-phosphoglycolate + (2R)-3-phosphoglycerate + 2 H(+). RuBisCO catalyzes two reactions: the carboxylation of D-ribulose 1,5-bisphosphate, the primary event in carbon dioxide fixation, as well as the oxidative fragmentation of the pentose substrate in the photorespiration process. Both reactions occur simultaneously and in competition at the same active site. In Jasminum simplicifolium subsp. suavissimum (Native jasmine), this protein is Ribulose bisphosphate carboxylase large chain.